The chain runs to 513 residues: Pleiotropic regulator 1 (513 aa).

M1 is subject to N-acetylmethionine. Phosphoserine occurs at positions 119 and 200. WD repeat units follow at residues 201-240, 243-282, 285-324, 327-366, 369-409, 410-448, and 459-498; these read GHLG…LKLS, GHIS…VIRH, GHLS…SVHT, GHTN…TRVT, NHKK…QNLS, GHNA…NFQR, and DSES…TEET. At S390 the chain carries Phosphoserine.

This sequence belongs to the WD repeat PRL1/PRL2 family. Identified in the spliceosome C complex. Component of the PRP19-CDC5L splicing complex composed of a core complex comprising a homotetramer of PRPF19, CDC5L, PLRG1 and BCAS2, and at least three less stably associated proteins CTNNBL1, CWC15 and HSPA8. Interacts (via its WD40 repeat domain) directly with CDC5L (via its C-terminal); the interaction is required for mRNA splicing but not for spliceosome assembly. Component of the minor spliceosome, which splices U12-type introns. Within this complex, interacts with CRIPT. Also interacts directly in the complex with BCAS2 and PRPF19. Interacts with USB1.

It localises to the nucleus. The protein localises to the nucleus speckle. Functionally, involved in pre-mRNA splicing as component of the spliceosome. Component of the PRP19-CDC5L complex that forms an integral part of the spliceosome and is required for activating pre-mRNA splicing. As a component of the minor spliceosome, involved in the splicing of U12-type introns in pre-mRNAs. The polypeptide is Pleiotropic regulator 1 (PLRG1) (Bos taurus (Bovine)).